The chain runs to 389 residues: Serpentine receptor class alpha/beta-14 (389 aa).

Topologically, residues Met1–Arg45 are extracellular. A glycan (N-linked (GlcNAc...) asparagine) is linked at Asn23. The helical transmembrane segment at Leu46–Leu66 threads the bilayer. Over Leu67–Ser81 the chain is Cytoplasmic. Residues Leu82–Tyr102 traverse the membrane as a helical segment. The Extracellular portion of the chain corresponds to His103–Cys123. A disulfide bridge connects residues Cys123 and Cys198. A helical membrane pass occupies residues Ala124–Leu144. At Ala145–Gly167 the chain is on the cytoplasmic side. Residues Leu168–Leu188 form a helical membrane-spanning segment. At Arg189–Ser208 the chain is on the extracellular side. The chain crosses the membrane as a helical span at residues Val209–Leu229. At Leu230–Ser268 the chain is on the cytoplasmic side. The helical transmembrane segment at Ile269–Ile289 threads the bilayer. Residues Tyr290–Pro303 lie on the Extracellular side of the membrane. A helical membrane pass occupies residues Phe304–Val324. Residues Val325–Lys389 are Cytoplasmic-facing.

This sequence belongs to the nematode receptor-like protein srab family.

Its subcellular location is the membrane. This Caenorhabditis elegans protein is Serpentine receptor class alpha/beta-14.